Here is a 375-residue protein sequence, read N- to C-terminus: Eukaryotic translation initiation factor 3 subunit F (375 aa).

The MPN domain occupies 30–166; it reads VVIQPQALFS…TRAYISAPVG (137 aa). Positions 307–375 are disordered; it reads LGGESGSGES…EAQNGKEEKK (69 aa). Residues 323 to 332 are compositionally biased toward gly residues; that stretch reads QRGGKGGRGG. Composition is skewed to basic and acidic residues over residues 336–345 and 358–375; these read TQERSGEEAR and RSYEERTNEAQNGKEEKK.

The protein belongs to the eIF-3 subunit F family. In terms of assembly, component of the eukaryotic translation initiation factor 3 (eIF-3) complex.

The protein localises to the cytoplasm. Its function is as follows. Component of the eukaryotic translation initiation factor 3 (eIF-3) complex, which is involved in protein synthesis of a specialized repertoire of mRNAs and, together with other initiation factors, stimulates binding of mRNA and methionyl-tRNAi to the 40S ribosome. The eIF-3 complex specifically targets and initiates translation of a subset of mRNAs involved in cell proliferation. In Aspergillus niger (strain ATCC MYA-4892 / CBS 513.88 / FGSC A1513), this protein is Eukaryotic translation initiation factor 3 subunit F.